Consider the following 196-residue polypeptide: Anthranilate synthase component 2 (196 aa).

The region spanning 3–196 (NIVFIDNFDS…IEWALEKNNA (194 aa)) is the Glutamine amidotransferase type-1 domain. 57-59 (GPG) lines the L-glutamine pocket. Cysteine 84 (nucleophile; for GATase activity) is an active-site residue. Residues glutamine 88 and 134-135 (SL) contribute to the L-glutamine site. Catalysis depends on for GATase activity residues histidine 170 and glutamate 172.

In terms of assembly, heterotetramer consisting of two non-identical subunits: a beta subunit (TrpG) and a large alpha subunit (TrpE).

It catalyses the reaction chorismate + L-glutamine = anthranilate + pyruvate + L-glutamate + H(+). It functions in the pathway amino-acid biosynthesis; L-tryptophan biosynthesis; L-tryptophan from chorismate: step 1/5. Its function is as follows. Part of a heterotetrameric complex that catalyzes the two-step biosynthesis of anthranilate, an intermediate in the biosynthesis of L-tryptophan. In the first step, the glutamine-binding beta subunit (TrpG) of anthranilate synthase (AS) provides the glutamine amidotransferase activity which generates ammonia as a substrate that, along with chorismate, is used in the second step, catalyzed by the large alpha subunit of AS (TrpE) to produce anthranilate. In the absence of TrpG, TrpE can synthesize anthranilate directly from chorismate and high concentrations of ammonia. The chain is Anthranilate synthase component 2 (trpG) from Vibrio parahaemolyticus serotype O3:K6 (strain RIMD 2210633).